The chain runs to 626 residues: Chaperone protein HtpG (626 aa).

An a; substrate-binding region spans residues 1-331; it reads MSETVERHEF…TDDLPLNVSR (331 aa). Residues 332-544 form a b region; that stretch reads EMLQSTPTLQ…GMGPDLQMQR (213 aa). The segment at 545-626 is c; sequence LLRRAGRGFG…GTAAKPAESA (82 aa).

Belongs to the heat shock protein 90 family. In terms of assembly, homodimer.

It is found in the cytoplasm. In terms of biological role, molecular chaperone. Has ATPase activity. The protein is Chaperone protein HtpG of Methylorubrum extorquens (strain PA1) (Methylobacterium extorquens).